The following is a 228-amino-acid chain: MSEEPVAAPGTISHPVYKLKRNWTWWYLNDERNKSWEERLKNVKTFSSVGEFWALHDSIKPPSGLNPPSDYNVFRDGIEPMWEVPQNQNGGRWLITIEKGRTPEIMDTIWTEILMAMIGEQFSDDIESLCGIVCNVRGKGSKISVWTTNSADDGANLRIGGVLKQVLNNASMIHQRPLYDVLRYEDHESCQKKTSSGVKAKHAIYAVEPREEKAPVPVSTETPATPAT.

A disulfide bridge connects residues C130 and C134.

It belongs to the eukaryotic initiation factor 4E family. As to quaternary structure, eIF4F is a multi-subunit complex, the composition of which varies with external and internal environmental conditions. It is composed of at least eIF4A, eIF4E and eIF4G. eIF4E is also known to interact with other partners. Highly expressed in all somatic tissues.

Its function is as follows. Recognizes and binds the 7-methylguanosine-containing mRNA cap during an early step in the initiation of protein synthesis and facilitates ribosome binding by inducing the unwinding of the mRNAs secondary structures. All 5 eIF4E proteins bind monomethyl cap structures. Only ife-1, ife-2 and ife-5 bind trimethyl cap structures which result from trans-splicing. Translation of trimethyl cap structure mRNAs may be regulated by intracellular redox state; disulfide bonds change the width and depth of the cap-binding cavity determining selectivity to mRNA caps. Probably by regulating mRNA translation in somatic cells, negatively regulates lifespan independently of daf-2/insulin and let-363/TOR pathways. Negatively regulates resistance to oxidative stress. May play a role in embryonic development. This Caenorhabditis elegans protein is Eukaryotic translation initiation factor 4E-2 (ife-2).